The chain runs to 288 residues: CUF1-dependent copper transporter 1 (288 aa).

Asn-18 is a glycosylation site (N-linked (GlcNAc...) asparagine). The helical transmembrane segment at 42–62 (MPSSAGATVGVCIGLFILAIF) threads the bilayer. 2 disordered regions span residues 106-125 (PVLFNRRSSTKKEKDVYNPL) and 154-180 (RESQEGSSAPSYAHSQQGQAQAQGSGV). Over residues 158–167 (EGSSAPSYAH) the composition is skewed to polar residues. Residues 168–177 (SQQGQAQAQG) are compositionally biased toward low complexity. Residues 251–271 (LLMLVVMTFNIWWMISVVIGC) form a helical membrane-spanning segment.

Belongs to the copper transporter (Ctr) (TC 1.A.56) family. SLC31A subfamily. In terms of assembly, interacts with the copper acquisition factor BIM1.

The protein resides in the cell membrane. High affinity copper transporter involved in Cu(+) import into the cell upon copper-limitating conditions. Functions with BIM1 and probably also FRE4 and FRE7, where FRE4 and FRE7 metalloreductases liberate the Cu(2+) bound to the BIM1 copper-binding site for subsequent import of Cu(+) into the cell by CTR1, via the reduction of BIM1-bound Cu(2+) to Cu(+) to reduce binding affinity for BIM1 but increase affinity for CTR1. The BIM1-CTR1 pathway for copper uptake plays a key role in colonization in the brain where copper amounts are low and thus in cryptococcal meningitis. This chain is CUF1-dependent copper transporter 1, found in Cryptococcus neoformans var. grubii serotype A (strain H99 / ATCC 208821 / CBS 10515 / FGSC 9487) (Filobasidiella neoformans var. grubii).